The following is a 468-amino-acid chain: Trehalose-2-sulfate acyltransferase PapA2 (468 aa).

The protein belongs to the PapA acyltransferase family.

It carries out the reaction 2-O-sulfo-alpha,alpha-trehalose + hexadecanoyl-CoA = 2-O-sulfo-2'-O-hexadecanoyl-alpha,alpha-trehalose + CoA. In terms of biological role, required for the biosynthesis of sulfolipid-1 (SL-1), a major mycobacterial cell wall lipid. Catalyzes the acylation of trehalose-2-sulfate by adding the palmitoyl group at the 2'-position to yield the intermediate trehalose-2-sulfate-2'-palmitate (SL659). The sequence is that of Trehalose-2-sulfate acyltransferase PapA2 (papA2) from Mycobacterium bovis (strain ATCC BAA-935 / AF2122/97).